The following is a 320-amino-acid chain: 1,5-anhydro-D-fructose reductase (320 aa).

The active-site Proton donor is the Y40. Position 102 (H102) interacts with substrate. NADP(+)-binding positions include Q194 and 265–277; that span reads IPGS…IKEN.

It belongs to the aldo/keto reductase family. In terms of assembly, monomer.

It is found in the cytoplasm. It carries out the reaction 1,5-anhydro-D-glucitol + NADP(+) = 1,5-anhydro-D-fructose + NADPH + H(+). With respect to regulation, inhibited by p-chloromercuribenzoic acid and alkyliodines. Its function is as follows. Catalyzes the NADPH-dependent reduction of 1,5-anhydro-D-fructose (AF) to 1,5-anhydro-D-glucitol. The sequence is that of 1,5-anhydro-D-fructose reductase (AKR1E2) from Macaca fascicularis (Crab-eating macaque).